The chain runs to 221 residues: Small ribosomal subunit protein uS5 (221 aa).

Residues 46–109 (LKDEVIDIKR…INAKLNIMEI (64 aa)) form the S5 DRBM domain.

This sequence belongs to the universal ribosomal protein uS5 family. As to quaternary structure, part of the 30S ribosomal subunit. Contacts protein S4.

Functionally, with S4 and S12 plays an important role in translational accuracy. The chain is Small ribosomal subunit protein uS5 from Thermoplasma acidophilum (strain ATCC 25905 / DSM 1728 / JCM 9062 / NBRC 15155 / AMRC-C165).